The primary structure comprises 809 residues: Zygotic DNA replication licensing factor mcm3 (809 aa).

In terms of domain architecture, MCM spans 297–504; the sequence is IFEQLSRSLA…QDREISDHVL (208 aa). 347–354 is a binding site for ATP; it reads GDPSVAKS. Residues 479 to 482 carry the Arginine finger motif; that stretch reads SRFD. The disordered stretch occupies residues 664 to 741; it reads KKRRRRDEDS…TDSSAKPGLS (78 aa). Over residues 696–705 the composition is skewed to basic and acidic residues; the sequence is AQEGESHDPY.

Belongs to the MCM family. As to quaternary structure, component of the mcm2-7 complex (RLF-M). The complex forms a toroidal hexameric ring with the proposed subunit order mcm2-mcm6-mcm4-mcm7-mcm3-mcm5. Component of the CMG helicase complex, composed of the mcm2-7 complex, the GINS complex and cdc45.

The protein localises to the nucleus. It is found in the chromosome. It carries out the reaction ATP + H2O = ADP + phosphate + H(+). Acts as a component of the MCM2-7 complex (MCM complex) which is the putative replicative helicase essential for 'once per cell cycle' DNA replication initiation and elongation in eukaryotic cells. The active ATPase sites in the MCM2-7 ring are formed through the interaction surfaces of two neighboring subunits such that a critical structure of a conserved arginine finger motif is provided in trans relative to the ATP-binding site of the Walker A box of the adjacent subunit. The six ATPase active sites, however, are likely to contribute differentially to the complex helicase activity. The existence of maternal and zygotic forms of mcm3 and mcm6 suggests that specific forms of mcm2-7 complexes may be used during different stages of development. This is Zygotic DNA replication licensing factor mcm3 (zmcm3) from Xenopus tropicalis (Western clawed frog).